Reading from the N-terminus, the 264-residue chain is Short chain dehydrogenase/reductase AacuN (264 aa).

NADP(+) contacts are provided by Ile24, Asp70, Asn97, and Arg130. Residues Ser146, Ser147, and Tyr161 each act as proton donor in the active site. Tyr161, Lys165, and Thr196 together coordinate NADP(+). Lys165 acts as the Lowers pKa of active site Tyr in catalysis.

Belongs to the short-chain dehydrogenases/reductases (SDR) family.

It carries out the reaction 3,8,9,10-tetrahydroxy-6-methyl-1,4-dihydroanthracen-1-one + NADPH + H(+) = (3R)-3,8,9,10-tetrahydroxy-6-methyl-1,2,3,4-tetrahydroanthracen-1-one + NADP(+). It participates in secondary metabolite biosynthesis. In terms of biological role, atrochrysone carboxylic acid synthase; part of the gene cluster that mediates the biosynthesis of the tetrahydroxanthone dimer secalonic acid D. The pathway begins with the synthesis of atrochrysone thioester by the polyketide synthase AacuL. The atrochrysone carboxyl ACP thioesterase AacuM then breaks the thioester bond and releases the atrochrysone carboxylic acid from AacuL. Atrochrysone carboxylic acid is decarboxylated by the decarboxylase AacuI, and oxidized by the anthrone oxygenase AacuG to yield emodin. Emodin is then reduced to emodin hydroquinone by a yet unidentified oxidoreductase. A-ring reduction by the short chain dehydrogenase AacuN, dehydration by the scytalone dehydratase-like protein AacuK and probable spontaneous re-oxidation, results in overall deoxygenation to chrysophanol. Baeyer-Villiger oxidation by the Baeyer-Villiger monooxygenase (BVMO) AacuH then yields monodictyphenone. Monodictyphenone is transformed into compounds with the tetrahydroxanthone skeleton via methylesterification by the methyltransferase AacuQ, followed by the action of the flavin-dependent monooxygenase AacuC, the isomerase AacuP, and the short chain dehydrogenase/reductase AacuF or AacuD. AacuF and AacuD should accept the same compound as a substrate but perform the ketoreduction with a different stereoselectivity, thus yielding blennolides B and A, respectively. In the final step of the biosynthesis, the cytochrome P450 monooxygenase AacuE accepts blennolide B and/or blennolide A to conduct the dimerization reaction to furnish the tetrahydroxanthone dimers, secalonic acids D, B, and F. This Aspergillus aculeatus (strain ATCC 16872 / CBS 172.66 / WB 5094) protein is Short chain dehydrogenase/reductase AacuN.